Consider the following 248-residue polypeptide: Probable transcriptional regulatory protein P9303_05381 (248 aa).

This sequence belongs to the TACO1 family.

It localises to the cytoplasm. This Prochlorococcus marinus (strain MIT 9303) protein is Probable transcriptional regulatory protein P9303_05381.